We begin with the raw amino-acid sequence, 126 residues long: Fluoride-specific ion channel FluC (126 aa).

4 helical membrane-spanning segments follow: residues 5–25, 34–54, 67–87, and 95–115; these read IAVI…FALW, WGTL…LAVF, LVIT…GEVV, and FGLA…LTWA. 2 residues coordinate Na(+): Gly-74 and Thr-77.

It belongs to the fluoride channel Fluc/FEX (TC 1.A.43) family.

Its subcellular location is the cell inner membrane. The enzyme catalyses fluoride(in) = fluoride(out). Its activity is regulated as follows. Na(+) is not transported, but it plays an essential structural role and its presence is essential for fluoride channel function. In terms of biological role, fluoride-specific ion channel. Important for reducing fluoride concentration in the cell, thus reducing its toxicity. The chain is Fluoride-specific ion channel FluC from Paracidovorax citrulli (strain AAC00-1) (Acidovorax citrulli).